Here is a 149-residue protein sequence, read N- to C-terminus: MSRKGPFSIRNAAADTFAMVIFCFITGMFIEIFISGMTFEQSLASRMLSIPVNIAIAWPYGVFRDFMLRQGSRVSSMSFIKNVADLTAYVLFQSPVYAAILFTVGASTDQIITAVSSNAAVSCVMGVFYGYFLDACRKAFKVPGYTQRV.

Transmembrane regions (helical) follow at residues 17-37 (FAMV…ISGM), 43-63 (LASR…YGVF), 86-106 (LTAY…TVGA), and 111-131 (IITA…FYGY).

Belongs to the AlaE exporter family.

The protein localises to the cell inner membrane. Its function is as follows. Exports L-alanine. In Aliivibrio salmonicida (strain LFI1238) (Vibrio salmonicida (strain LFI1238)), this protein is L-alanine exporter AlaE.